The following is a 139-amino-acid chain: D-ribose pyranase (139 aa).

Catalysis depends on histidine 20, which acts as the Proton donor. Residues aspartate 28, histidine 106, and 128–130 each bind substrate; that span reads YAN.

This sequence belongs to the RbsD / FucU family. RbsD subfamily. Homodecamer.

It is found in the cytoplasm. The catalysed reaction is beta-D-ribopyranose = beta-D-ribofuranose. Its pathway is carbohydrate metabolism; D-ribose degradation; D-ribose 5-phosphate from beta-D-ribopyranose: step 1/2. In terms of biological role, catalyzes the interconversion of beta-pyran and beta-furan forms of D-ribose. This Citrobacter koseri (strain ATCC BAA-895 / CDC 4225-83 / SGSC4696) protein is D-ribose pyranase.